A 253-amino-acid polypeptide reads, in one-letter code: tRNA-cytidine(32) 2-sulfurtransferase 2 (253 aa).

A PP-loop motif motif is present at residues 33–38 (SGGKDS). [4Fe-4S] cluster contacts are provided by cysteine 108, cysteine 111, and cysteine 199.

It belongs to the TtcA family. In terms of assembly, homodimer. Requires Mg(2+) as cofactor. [4Fe-4S] cluster serves as cofactor.

It localises to the cytoplasm. The enzyme catalyses cytidine(32) in tRNA + S-sulfanyl-L-cysteinyl-[cysteine desulfurase] + AH2 + ATP = 2-thiocytidine(32) in tRNA + L-cysteinyl-[cysteine desulfurase] + A + AMP + diphosphate + H(+). The protein operates within tRNA modification. Catalyzes the ATP-dependent 2-thiolation of cytidine in position 32 of tRNA, to form 2-thiocytidine (s(2)C32). The sulfur atoms are provided by the cysteine/cysteine desulfurase (IscS) system. This chain is tRNA-cytidine(32) 2-sulfurtransferase 2, found in Francisella tularensis subsp. novicida (strain U112).